Consider the following 426-residue polypeptide: PI-PLC X domain-containing protein At5g67130 (426 aa).

An N-terminal signal peptide occupies residues 1–28 (MSACINGLCRAVTVSLLLLLLSFSFSSA). In terms of domain architecture, PI-PLC X-box spans 76-232 (IINGLPFNKY…MVQENHRLLV (157 aa)). N151 and N255 each carry an N-linked (GlcNAc...) asparagine glycan. Residues 258–277 (GDPGVKRGSCPNRKESQPLN) are disordered. An N-linked (GlcNAc...) asparagine glycan is attached at N370. S404 carries the GPI-anchor amidated serine lipid modification. Residues 405 to 426 (VAQLNNIVVFCFSLLPLLIFLL) constitute a propeptide, removed in mature form.

The protein localises to the cell membrane. In Arabidopsis thaliana (Mouse-ear cress), this protein is PI-PLC X domain-containing protein At5g67130.